A 428-amino-acid chain; its full sequence is Aerobic C4-dicarboxylate transport protein (428 aa).

Helical transmembrane passes span 5–27 (LFKS…GHFY), 47–64 (MIIA…IAGM), 77–99 (ALLY…VNVV), 141–163 (VIGA…FGFA), 184–206 (VIFG…AMAF), 219–241 (LGQL…LGSI), 326–348 (IVHQ…GVTG), and 352–374 (IVLA…LILG).

It belongs to the dicarboxylate/amino acid:cation symporter (DAACS) (TC 2.A.23) family.

It localises to the cell inner membrane. Its function is as follows. Responsible for the aerobic transport of the dicarboxylates fumarate and malate and to a lesser extent succinate, from the periplasm across the inner membrane. In Escherichia coli O157:H7, this protein is Aerobic C4-dicarboxylate transport protein.